We begin with the raw amino-acid sequence, 126 residues long: Profilin-1A (126 aa).

The actin binding stretch occupies residues 2 to 36; sequence SWQTYVDTNLVGTGAVTQAAILGLDGNTWATSAGF. Residue Lys-104 is modified to N6,N6,N6-trimethyllysine.

This sequence belongs to the profilin family. Occurs in many kinds of cells as a complex with monomeric actin in a 1:1 ratio.

It localises to the cytoplasm. Its subcellular location is the cytoskeleton. Functionally, binds to actin and affects the structure of the cytoskeleton. At high concentrations, profilin prevents the polymerization of actin, whereas it enhances it at low concentrations. By binding to PIP2, it inhibits the formation of IP3 and DG. This is Profilin-1A from Acanthamoeba castellanii (Amoeba).